The primary structure comprises 142 residues: Large ribosomal subunit protein uL13 (142 aa).

The protein belongs to the universal ribosomal protein uL13 family. Part of the 50S ribosomal subunit.

Functionally, this protein is one of the early assembly proteins of the 50S ribosomal subunit, although it is not seen to bind rRNA by itself. It is important during the early stages of 50S assembly. This is Large ribosomal subunit protein uL13 from Pyrococcus horikoshii (strain ATCC 700860 / DSM 12428 / JCM 9974 / NBRC 100139 / OT-3).